A 404-amino-acid chain; its full sequence is Adenylosuccinate synthetase (404 aa).

GTP contacts are provided by residues 12–18 (GDEGKGK) and 40–42 (GHT). Catalysis depends on Asp13, which acts as the Proton acceptor. Mg(2+)-binding residues include Asp13 and Gly40. Residues 13 to 16 (DEGK), 38 to 41 (NAGH), Thr121, Arg135, Gln213, Thr228, and Arg296 contribute to the IMP site. Residue His41 is the Proton donor of the active site. 292–298 (TTTGRAR) is a binding site for substrate. Residues Arg298, 324 to 326 (KMD), and 389 to 391 (SCG) each bind GTP.

It belongs to the adenylosuccinate synthetase family. In terms of assembly, homodimer. Mg(2+) serves as cofactor.

The protein resides in the cytoplasm. It catalyses the reaction IMP + L-aspartate + GTP = N(6)-(1,2-dicarboxyethyl)-AMP + GDP + phosphate + 2 H(+). It participates in purine metabolism; AMP biosynthesis via de novo pathway; AMP from IMP: step 1/2. Functionally, plays an important role in the de novo pathway of purine nucleotide biosynthesis. Catalyzes the first committed step in the biosynthesis of AMP from IMP. The chain is Adenylosuccinate synthetase from Deinococcus geothermalis (strain DSM 11300 / CIP 105573 / AG-3a).